Here is a 93-residue protein sequence, read N- to C-terminus: UPF0367 protein gsr3177 (93 aa).

This sequence belongs to the UPF0367 family.

The sequence is that of UPF0367 protein gsr3177 from Gloeobacter violaceus (strain ATCC 29082 / PCC 7421).